The sequence spans 214 residues: Glucose-6-phosphate isomerase (214 aa).

The Fe cation site is built by H92, H94, E101, and H140.

Belongs to the archaeal-type GPI family. In terms of assembly, homodimer.

The protein localises to the cytoplasm. The catalysed reaction is alpha-D-glucose 6-phosphate = beta-D-fructose 6-phosphate. Its pathway is carbohydrate degradation; glycolysis; D-glyceraldehyde 3-phosphate and glycerone phosphate from D-glucose: step 2/4. The protein is Glucose-6-phosphate isomerase of Sinorhizobium medicae (strain WSM419) (Ensifer medicae).